Reading from the N-terminus, the 266-residue chain is MSEPHLLIDAGNSRIKWALADARRTLVDTGAFGHTRDGGADPDWSRLPRPRGAWISNVAGADVAARIDALLDARWPGLPRTTIRSRPAQCGVTNGYTTPEQLGSDRWAGLIGAHAAFPGEHLLIATFGTATTLEALRADGCFTGGLIAPGWALMMRALGTHTAQLPTLTTDIASGLLAGAQAEPFQVDTPRSLSAGCLYAQAGLIERAWRDLVAAWQAPVRLVLAGGAADDVARALTIAHTRHDTLILSGLALIAADAADPATAPD.

An ATP-binding site is contributed by 9-16 (DAGNSRIK). Substrate is bound by residues Tyr-96 and 103–106 (GSDR). Catalysis depends on Asp-105, which acts as the Proton acceptor. Thr-129 lines the ATP pocket. Thr-189 lines the substrate pocket.

Belongs to the type III pantothenate kinase family. Homodimer. NH4(+) serves as cofactor. It depends on K(+) as a cofactor.

The protein resides in the cytoplasm. It catalyses the reaction (R)-pantothenate + ATP = (R)-4'-phosphopantothenate + ADP + H(+). It participates in cofactor biosynthesis; coenzyme A biosynthesis; CoA from (R)-pantothenate: step 1/5. Its function is as follows. Catalyzes the phosphorylation of pantothenate (Pan), the first step in CoA biosynthesis. The chain is Type III pantothenate kinase from Burkholderia cenocepacia (strain ATCC BAA-245 / DSM 16553 / LMG 16656 / NCTC 13227 / J2315 / CF5610) (Burkholderia cepacia (strain J2315)).